We begin with the raw amino-acid sequence, 728 residues long: 1,4-alpha-glucan branching enzyme GlgB (728 aa).

Catalysis depends on D409, which acts as the Nucleophile. E462 acts as the Proton donor in catalysis.

The protein belongs to the glycosyl hydrolase 13 family. GlgB subfamily. As to quaternary structure, monomer.

It carries out the reaction Transfers a segment of a (1-&gt;4)-alpha-D-glucan chain to a primary hydroxy group in a similar glucan chain.. It participates in glycan biosynthesis; glycogen biosynthesis. Its function is as follows. Catalyzes the formation of the alpha-1,6-glucosidic linkages in glycogen by scission of a 1,4-alpha-linked oligosaccharide from growing alpha-1,4-glucan chains and the subsequent attachment of the oligosaccharide to the alpha-1,6 position. This is 1,4-alpha-glucan branching enzyme GlgB from Cereibacter sphaeroides (strain ATCC 17023 / DSM 158 / JCM 6121 / CCUG 31486 / LMG 2827 / NBRC 12203 / NCIMB 8253 / ATH 2.4.1.) (Rhodobacter sphaeroides).